The primary structure comprises 220 residues: 7-carboxy-7-deazaguanine synthase (220 aa).

Substrate-binding positions include 16–18 (IQG) and R31. The 194-residue stretch at 22–215 (FAGWPCAFVR…LQLHKYIWNP (194 aa)) folds into the Radical SAM core domain. [4Fe-4S] cluster-binding residues include C35, C39, and C42. Mg(2+) is bound at residue T44. Substrate is bound at residue T74. G76 is an S-adenosyl-L-methionine binding site.

This sequence belongs to the radical SAM superfamily. 7-carboxy-7-deazaguanine synthase family. In terms of assembly, homodimer. [4Fe-4S] cluster is required as a cofactor. It depends on S-adenosyl-L-methionine as a cofactor. Requires Mg(2+) as cofactor.

It catalyses the reaction 6-carboxy-5,6,7,8-tetrahydropterin + H(+) = 7-carboxy-7-deazaguanine + NH4(+). The protein operates within purine metabolism; 7-cyano-7-deazaguanine biosynthesis. In terms of biological role, catalyzes the complex heterocyclic radical-mediated conversion of 6-carboxy-5,6,7,8-tetrahydropterin (CPH4) to 7-carboxy-7-deazaguanine (CDG), a step common to the biosynthetic pathways of all 7-deazapurine-containing compounds. In Chlorobaculum tepidum (strain ATCC 49652 / DSM 12025 / NBRC 103806 / TLS) (Chlorobium tepidum), this protein is 7-carboxy-7-deazaguanine synthase.